A 115-amino-acid chain; its full sequence is Thiosulfate:glutathione sulfurtransferase (115 aa).

In terms of domain architecture, Rhodanese spans 17-115 (ASGRARLFDV…AYREWLEKES (99 aa)). Cys79 (cysteine persulfide intermediate) is an active-site residue.

As to expression, highly expressed in kidney, liver and skeletal muscle. Lower levels of expression in heart, colon, thymus, spleen, placenta and lung. Weakly expressed in brain, small intestine and peripheral blood leukocytes. Expressed at high levels in the breast carcinoma cell lines MCF-7 and MDA-MB-468 and at a lower level in the breast carcinoma cell line MDA-MB-231, the colon carcinoma call line LoVo and the lung carcinoma cell line A-549. No expression in the cell lines EFO-27 and HeLa, or the normal breast tissue cell lines MCF-10A and H184A1. Detected in invasive ductal carcinoma, but not in the adjacent tissues.

It localises to the cytoplasm. It is found in the perinuclear region. The enzyme catalyses thiosulfate + glutathione = S-sulfanylglutathione + sulfite + H(+). The catalysed reaction is thiosulfate + 2 glutathione = glutathione disulfide + hydrogen sulfide + sulfite + 2 H(+). With respect to regulation, GSS(-) is a potent inhibitor of TSTD1, since the presence of the sulfur dioxygenase (SDO) strongly increases the TSTD1 catalytic activity. In terms of biological role, thiosulfate:glutathione sulfurtransferase (TST) required to produce S-sulfanylglutathione (GSS(-)), a central intermediate in hydrogen sulfide metabolism. Provides the link between the first step in mammalian H(2)S metabolism performed by the sulfide:quinone oxidoreductase (SQOR) which catalyzes the conversion of H(2)S to thiosulfate, and the sulfur dioxygenase (SDO) which uses GSS(-) as substrate. The thermodynamic coupling of the irreversible SDO and reversible TST reactions provides a model for the physiologically relevant reaction with thiosulfate as the sulfane donor. GSS(-) spontaneously reacts with glutathione to form glutathione disulfide. In Homo sapiens (Human), this protein is Thiosulfate:glutathione sulfurtransferase (TSTD1).